The following is a 288-amino-acid chain: Release factor glutamine methyltransferase (288 aa).

Residues Gly-123–Gly-127, Asp-146, and Asn-190 contribute to the S-adenosyl-L-methionine site. Asn-190–Tyr-193 contacts substrate.

The protein belongs to the protein N5-glutamine methyltransferase family. PrmC subfamily.

The enzyme catalyses L-glutaminyl-[peptide chain release factor] + S-adenosyl-L-methionine = N(5)-methyl-L-glutaminyl-[peptide chain release factor] + S-adenosyl-L-homocysteine + H(+). Functionally, methylates the class 1 translation termination release factors RF1/PrfA and RF2/PrfB on the glutamine residue of the universally conserved GGQ motif. In Bacillus subtilis (strain 168), this protein is Release factor glutamine methyltransferase.